The sequence spans 986 residues: Bifunctional glutamine synthetase adenylyltransferase/adenylyl-removing enzyme (986 aa).

An adenylyl removase region spans residues 1–473 (MTSSAPGNAD…HYARLFEGDP (473 aa)). The interval 478-986 (SLPPVNYGAG…RRVFTALLER (509 aa)) is adenylyl transferase.

The protein belongs to the GlnE family. It depends on Mg(2+) as a cofactor.

The catalysed reaction is [glutamine synthetase]-O(4)-(5'-adenylyl)-L-tyrosine + phosphate = [glutamine synthetase]-L-tyrosine + ADP. The enzyme catalyses [glutamine synthetase]-L-tyrosine + ATP = [glutamine synthetase]-O(4)-(5'-adenylyl)-L-tyrosine + diphosphate. Functionally, involved in the regulation of glutamine synthetase GlnA, a key enzyme in the process to assimilate ammonia. When cellular nitrogen levels are high, the C-terminal adenylyl transferase (AT) inactivates GlnA by covalent transfer of an adenylyl group from ATP to specific tyrosine residue of GlnA, thus reducing its activity. Conversely, when nitrogen levels are low, the N-terminal adenylyl removase (AR) activates GlnA by removing the adenylyl group by phosphorolysis, increasing its activity. The regulatory region of GlnE binds the signal transduction protein PII (GlnB) which indicates the nitrogen status of the cell. The protein is Bifunctional glutamine synthetase adenylyltransferase/adenylyl-removing enzyme of Bradyrhizobium sp. (strain ORS 278).